The primary structure comprises 202 residues: Small ribosomal subunit protein uS4c (202 aa).

Residues 13 to 37 form a disordered region; that stretch reads RRPGVSPGLTSKTLKSKSNYIDRST. Positions 20–37 are enriched in polar residues; it reads GLTSKTLKSKSNYIDRST. The S4 RNA-binding domain maps to 90–153; sequence MRLDNTIFRL…ESRSMISKNI (64 aa).

The protein belongs to the universal ribosomal protein uS4 family. Part of the 30S ribosomal subunit. Contacts protein S5. The interaction surface between S4 and S5 is involved in control of translational fidelity.

The protein localises to the plastid. It localises to the chloroplast. In terms of biological role, one of the primary rRNA binding proteins, it binds directly to 16S rRNA where it nucleates assembly of the body of the 30S subunit. Functionally, with S5 and S12 plays an important role in translational accuracy. The chain is Small ribosomal subunit protein uS4c (rps4) from Takakia lepidozioides (Moss).